The chain runs to 328 residues: GTP 3',8-cyclase (328 aa).

A Radical SAM core domain is found at 1-229 (MNQVDYLRIS…DAQVRGAGPA (229 aa)). Position 8 (Arg8) interacts with GTP. The [4Fe-4S] cluster site is built by Cys15 and Cys19. Tyr21 contacts S-adenosyl-L-methionine. [4Fe-4S] cluster is bound at residue Cys22. Residue Arg60 coordinates GTP. Gly64 provides a ligand contact to S-adenosyl-L-methionine. Thr91 lines the GTP pocket. Ser115 contacts S-adenosyl-L-methionine. A GTP-binding site is contributed by Lys155. Met189 is a binding site for S-adenosyl-L-methionine. Cys252 and Cys255 together coordinate [4Fe-4S] cluster. GTP is bound at residue 257 to 259 (RMR). Position 269 (Cys269) interacts with [4Fe-4S] cluster.

It belongs to the radical SAM superfamily. MoaA family. Monomer and homodimer. It depends on [4Fe-4S] cluster as a cofactor.

The enzyme catalyses GTP + AH2 + S-adenosyl-L-methionine = (8S)-3',8-cyclo-7,8-dihydroguanosine 5'-triphosphate + 5'-deoxyadenosine + L-methionine + A + H(+). It functions in the pathway cofactor biosynthesis; molybdopterin biosynthesis. Its function is as follows. Catalyzes the cyclization of GTP to (8S)-3',8-cyclo-7,8-dihydroguanosine 5'-triphosphate. This is GTP 3',8-cyclase from Nostoc sp. (strain PCC 7120 / SAG 25.82 / UTEX 2576).